The sequence spans 87 residues: MADKRKYTRKYCKFTEAKIEFIDYKDTALLKYCLSERFKIMPRRLTGTSKKYQEMVEKAIKRARQAALIPYIVDRDNVVVNPFEILG.

It belongs to the bacterial ribosomal protein bS18 family. Part of the 30S ribosomal subunit. Forms a tight heterodimer with protein bS6.

In terms of biological role, binds as a heterodimer with protein bS6 to the central domain of the 16S rRNA, where it helps stabilize the platform of the 30S subunit. In Campylobacter hominis (strain ATCC BAA-381 / DSM 21671 / CCUG 45161 / LMG 19568 / NCTC 13146 / CH001A), this protein is Small ribosomal subunit protein bS18.